Reading from the N-terminus, the 122-residue chain is Large ribosomal subunit protein uL18 (122 aa).

Belongs to the universal ribosomal protein uL18 family. Part of the 50S ribosomal subunit; part of the 5S rRNA/L5/L18/L25 subcomplex. Contacts the 5S and 23S rRNAs.

Functionally, this is one of the proteins that bind and probably mediate the attachment of the 5S RNA into the large ribosomal subunit, where it forms part of the central protuberance. In Prochlorococcus marinus (strain MIT 9515), this protein is Large ribosomal subunit protein uL18.